A 157-amino-acid chain; its full sequence is Ribosomal RNA large subunit methyltransferase H (157 aa).

Residues Leu-73, Gly-105, and 124 to 129 (MSKMTF) contribute to the S-adenosyl-L-methionine site.

Belongs to the RNA methyltransferase RlmH family. Homodimer.

Its subcellular location is the cytoplasm. It catalyses the reaction pseudouridine(1915) in 23S rRNA + S-adenosyl-L-methionine = N(3)-methylpseudouridine(1915) in 23S rRNA + S-adenosyl-L-homocysteine + H(+). Specifically methylates the pseudouridine at position 1915 (m3Psi1915) in 23S rRNA. The sequence is that of Ribosomal RNA large subunit methyltransferase H from Bacteroides fragilis (strain ATCC 25285 / DSM 2151 / CCUG 4856 / JCM 11019 / LMG 10263 / NCTC 9343 / Onslow / VPI 2553 / EN-2).